We begin with the raw amino-acid sequence, 180 residues long: Epididymal-specific lipocalin-6 (180 aa).

A signal peptide spans 1-20; that stretch reads MGGLLLAALLALVAVPRAQA. A disulfide bond links cysteine 81 and cysteine 174.

This sequence belongs to the calycin superfamily. Lipocalin family.

Its subcellular location is the secreted. Functionally, may play a role in male fertility. The sequence is that of Epididymal-specific lipocalin-6 (LCN6) from Macaca mulatta (Rhesus macaque).